We begin with the raw amino-acid sequence, 135 residues long: Large ribosomal subunit protein eL27 (135 aa).

Belongs to the eukaryotic ribosomal protein eL27 family.

This Pisum sativum (Garden pea) protein is Large ribosomal subunit protein eL27 (RPL27).